The primary structure comprises 544 residues: 4-coumarate--CoA ligase 1 (544 aa).

Residues serine 190, serine 191, glycine 192, threonine 193, threonine 194, and lysine 198 each contribute to the ATP site. Tyrosine 240 contacts (E)-4-coumaroyl-AMP. CoA is bound at residue lysine 261. Positions 263 to 332 (DIVPFLELIQ…AKFPNAKLGQ (70 aa)) are SBD1. (E)-4-coumaroyl-AMP contacts are provided by alanine 310, glutamine 332, glycine 333, threonine 337, and methionine 345. ATP is bound by residues glutamine 332, glycine 333, and threonine 337. The interval 333 to 400 (GYGMTEAGPV…IRGDQIMKGY (68 aa)) is SBD2. ATP is bound by residues aspartate 421 and arginine 436. The (E)-4-coumaroyl-AMP site is built by lysine 438 and lysine 442. Positions 444 and 445 each coordinate CoA. Lysine 527 provides a ligand contact to ATP.

The protein belongs to the ATP-dependent AMP-binding enzyme family. The cofactor is Mg(2+).

The catalysed reaction is (E)-4-coumarate + ATP + CoA = (E)-4-coumaroyl-CoA + AMP + diphosphate. It catalyses the reaction (E)-4-coumarate + ATP + H(+) = (E)-4-coumaroyl-AMP + diphosphate. It carries out the reaction (E)-4-coumaroyl-AMP + CoA = (E)-4-coumaroyl-CoA + AMP + H(+). It functions in the pathway phytoalexin biosynthesis; 3,4',5-trihydroxystilbene biosynthesis; 3,4',5-trihydroxystilbene from trans-4-coumarate: step 1/2. Its function is as follows. Carboxylate--CoA ligase that may use 4-coumarate as substrate. Follows a two-step reaction mechanism, wherein the carboxylate substrate first undergoes adenylation by ATP, followed by a thioesterification in the presence of CoA to yield the final CoA thioester. The polypeptide is 4-coumarate--CoA ligase 1 (4CL1) (Petroselinum crispum (Parsley)).